The sequence spans 569 residues: MEDVKELIVRLAAENALKYGKADTKAVIGKILYMRPDLKQNVRELIPLVEEAVRAVNEMPKEALEGIVGEVKKEKKEEVRKWPDLPKAERGKVVTRVAPEPNGYPTLGHAKGLLVPFIYARLYDGKFLLRFEDTNPRVERLEYYEAIRNEFSRLLEACEEELGLSPGRWDEEIIESYHLEEMYSLAKKLIEAGKAYVCTCPAAEVRKRRKLGISCDHRDQPIEKNLELWEKMLNGGFREGEAHLRLKTDMSHPNVTMRDPGIFRVIEAEHPIHGDKYRVYPVYDFSVSVMDSLTGVTHAFRSKEFEPHVDVQRHIVRALGLREYEMIQFGRITVEGIPLSKRYIRPLVESGILEGWDDPRIPTLRGLFRRGINPRAIVRFFYELGPSKVDATVNMEAIASINRKILDPIAERYMFVPNPIKAKIEGLTPPVIAQVEVHPDSKRKREIRLDESEVFIASSDLEGLKPGDELRLRGLVNVTIRSVNPDEVSLRVSEEQRVKGVKIIQWAPVRNGVPARLFVPESPYSFRMLGGYGEPALRGIKEGEIVQFVRVGFARLDRRDPLTFILSHD.

Positions 99-109 (PEPNGYPTLGH) match the 'HIGH' region motif.

Belongs to the class-I aminoacyl-tRNA synthetase family. Glutamate--tRNA ligase type 2 subfamily.

The protein resides in the cytoplasm. It carries out the reaction tRNA(Glu) + L-glutamate + ATP = L-glutamyl-tRNA(Glu) + AMP + diphosphate. In terms of biological role, catalyzes the attachment of glutamate to tRNA(Glu) in a two-step reaction: glutamate is first activated by ATP to form Glu-AMP and then transferred to the acceptor end of tRNA(Glu). This chain is Glutamate--tRNA ligase, found in Korarchaeum cryptofilum (strain OPF8).